Consider the following 387-residue polypeptide: O-methyltransferase fsr2 (387 aa).

D231 is a binding site for S-adenosyl-L-methionine. The Proton acceptor role is filled by H280.

It belongs to the class I-like SAM-binding methyltransferase superfamily. Cation-independent O-methyltransferase family. COMT subfamily.

Its pathway is polyketide biosynthesis. O-methyltransferase; part of the gene cluster that mediates the biosynthesis of fusarubins, highly pigmented naphthoquinones responsible for the coloration of the fruiting bodies. The non-reducing polyketide synthase FSR1 is responsible for the condensation of seven acetyl-CoA units to yield a haptaketide. After rings A and B are formed by aldol-type cyclization, the PKS-derived product is released as 6-O-demethylfusarubinaldehyde. Then, two hydroxyl groups at C-5 and C-10 are incorporated by FSR3, and simultaneously hydroxyl groups at C-6 and C-8 are methylated by FSR2. The aldehyde is, on the one hand, reduced by FSR3 to 8-O-methylfusarubin alcohol, which equilibrates mainly with 8-O-methylfusarubin and only small amounts of 8-O-methylnectriafurone. On the other hand, the aldehyde can be oxidized to form 8-O-methylfusarubinic acid, a reaction driven by FSR3 equilibrating with 8-O-methylfusarubinlactone, finally resulting in 8-O-methylanhydrofusarubinlactol after a further reduction step and loss of water. 8-O-Methylfusarubinic acid can also undergo decarboxylation, resulting in 8-O-methyl-13-hydroxynorjavanicin after another hydroxylation step at C-13. Both steps are most likely also accomplished by FSR3. No enzymatic function has been determined so far for either FSR4 and FSR5. Their deletion does not alter the product spectrum, but the possibility that they catalyze specific enzymatic steps during perithecium development cannot be ruled out. FSR4 might possess a regulatory function in the biosynthesis of fusarubins. This Gibberella fujikuroi (strain CBS 195.34 / IMI 58289 / NRRL A-6831) (Bakanae and foot rot disease fungus) protein is O-methyltransferase fsr2.